The following is a 512-amino-acid chain: Endo-1,4-beta-xylanase A (512 aa).

A signal peptide spans 1-30; sequence MKRKVKKMAAMATSIIMAIMIILHSIPVLA. A GH11 domain is found at 33–228; the sequence is IIYDNETGTH…SSGYANVYKN (196 aa). The active-site Nucleophile is the glutamate 124. The Proton donor role is filled by glutamate 215. CBM6 domains lie at 251 to 371 and 388 to 508; these read SIIE…FIFS and SIIQ…FVFS. Ca(2+) is bound by residues glutamate 254 and glutamate 256. Residue threonine 271 participates in D-xylotriose binding. Ca(2+) is bound at residue arginine 276. The stretch at 279 to 340 is repeat 1; that stretch reads GYIENGNTVT…SSTGSWNTYQ (62 aa). Residues 279-477 are 2 X 61 AA approximate repeats; that stretch reads GYIENGNTVT…GSTGSFDTYR (199 aa). Tyrosine 280, asparagine 337, and asparagine 364 together coordinate D-xylotriose. D-xylobiose is bound by residues tyrosine 280, asparagine 337, and asparagine 364. The Ca(2+) site is built by aspartate 366, glutamine 391, glutamate 393, and serine 413. Copy 2 of the repeat occupies 416–477; sequence GYIENGYSTT…GSTGSFDTYR (62 aa). Positions 417, 474, and 501 each coordinate D-xylotriose. Aspartate 503 provides a ligand contact to Ca(2+).

The protein belongs to the glycosyl hydrolase 11 (cellulase G) family.

The catalysed reaction is Endohydrolysis of (1-&gt;4)-beta-D-xylosidic linkages in xylans.. Its pathway is glycan degradation; xylan degradation. The chain is Endo-1,4-beta-xylanase A (xynA) from Thermoclostridium stercorarium (Clostridium stercorarium).